The chain runs to 1142 residues: DNA-directed RNA polymerase subunit beta N-terminal section (1142 aa).

This sequence belongs to the RNA polymerase beta chain family. As to quaternary structure, in plastids the minimal PEP RNA polymerase catalytic core is composed of four subunits: alpha, beta, beta', and beta''. When a (nuclear-encoded) sigma factor is associated with the core the holoenzyme is formed, which can initiate transcription.

It is found in the plastid. Its subcellular location is the chloroplast. It carries out the reaction RNA(n) + a ribonucleoside 5'-triphosphate = RNA(n+1) + diphosphate. In terms of biological role, DNA-dependent RNA polymerase catalyzes the transcription of DNA into RNA using the four ribonucleoside triphosphates as substrates. In Pleurastrum terricola (Filamentous green alga), this protein is DNA-directed RNA polymerase subunit beta N-terminal section (rpoB1).